The following is a 1616-amino-acid chain: Putative inactive phenolphthiocerol synthesis polyketide synthase type I Pks1 (1616 aa).

The segment at 83–397 (TVVVFPGQGA…GQVFTTGVPV (315 aa)) is acyltransferase. The For acyltransferase activity role is filled by Ser-174. Residues 445–567 (HALLGAVVER…GMLGVAAAET (123 aa)) form an N-terminal hotdog fold region. The tract at residues 445-605 (HALLGAVVER…YAYGPAFQGL (161 aa)) is dehydratase. Positions 445-719 (HALLGAVVER…TRPITAEQLR (275 aa)) constitute a PKS/mFAS DH domain. His-477 acts as the Proton acceptor; for dehydratase activity in catalysis. Residues 579–719 (AESVDISDGY…TRPITAEQLR (141 aa)) form a C-terminal hotdog fold region. Asp-640 serves as the catalytic Proton donor; for dehydratase activity. The enoylreductase stretch occupies residues 910 to 1215 (GTLEDLVIQP…QARHIGKVVL (306 aa)). NADP(+) contacts are provided by residues 1040–1057 (VLIH…VQLA) and 1229–1244 (TVVI…GVLA). Positions 1228 to 1409 (GTVVITGATG…SLAWGLWEQP (182 aa)) are beta-ketoacyl reductase. The Carrier domain occupies 1514–1589 (ELLVGLVCLQ…AVAEYVAQQM (76 aa)). The residue at position 1549 (Ser-1549) is an O-(pantetheine 4'-phosphoryl)serine. Polar residues predominate over residues 1588 to 1604 (QMSGSRPTESGDPTSQV). The tract at residues 1588–1616 (QMSGSRPTESGDPTSQVVEPAAAEVSVHA) is disordered.

Pantetheine 4'-phosphate serves as cofactor.

It functions in the pathway lipid metabolism; fatty acid biosynthesis. May play a role in phthiocerol biosynthesis. The polypeptide is Putative inactive phenolphthiocerol synthesis polyketide synthase type I Pks1 (pks1) (Mycobacterium tuberculosis (strain ATCC 25618 / H37Rv)).